The primary structure comprises 148 residues: Lysozyme C (148 aa).

The first 18 residues, 1-18, serve as a signal peptide directing secretion; the sequence is MKALIILGLVLLSVTVQG. The C-type lysozyme domain occupies 19 to 148; it reads KIFERCELAR…VSQYVKGCGV (130 aa). 4 cysteine pairs are disulfide-bonded: Cys-24/Cys-146, Cys-48/Cys-134, Cys-83/Cys-99, and Cys-95/Cys-113. Catalysis depends on residues Glu-53 and Asp-71.

It belongs to the glycosyl hydrolase 22 family. Monomer.

It is found in the secreted. It carries out the reaction Hydrolysis of (1-&gt;4)-beta-linkages between N-acetylmuramic acid and N-acetyl-D-glucosamine residues in a peptidoglycan and between N-acetyl-D-glucosamine residues in chitodextrins.. In terms of biological role, lysozymes have primarily a bacteriolytic function; those in tissues and body fluids are associated with the monocyte-macrophage system and enhance the activity of immunoagents. This Pygathrix nemaeus (Red-shanked douc langur) protein is Lysozyme C (LYZ).